Consider the following 841-residue polypeptide: Translation initiation factor IF-2 (841 aa).

5 stretches are compositionally biased toward basic and acidic residues: residues 1–12 (MSDNEIKNEAPK), 52–92 (ALKA…EATK), 114–170 (EQPK…REEA), 188–202 (READ…EANR), and 213–235 (KKGD…DVKG). Disordered regions lie at residues 1–24 (MSDN…KTTV) and 52–246 (ALKA…GSAL). One can recognise a tr-type G domain in the interval 340–510 (TRAPVVTIMG…LLQSEVLELT (171 aa)). Positions 349–356 (GHVDHGKT) are G1. 349-356 (GHVDHGKT) is a binding site for GTP. The tract at residues 374–378 (GITQH) is G2. The segment at 396–399 (DTPG) is G3. GTP-binding positions include 396–400 (DTPGH) and 450–453 (NKID). The interval 450–453 (NKID) is G4. The tract at residues 486-488 (SAK) is G5.

The protein belongs to the TRAFAC class translation factor GTPase superfamily. Classic translation factor GTPase family. IF-2 subfamily.

Its subcellular location is the cytoplasm. One of the essential components for the initiation of protein synthesis. Protects formylmethionyl-tRNA from spontaneous hydrolysis and promotes its binding to the 30S ribosomal subunits. Also involved in the hydrolysis of GTP during the formation of the 70S ribosomal complex. In Actinobacillus pleuropneumoniae serotype 5b (strain L20), this protein is Translation initiation factor IF-2.